The sequence spans 127 residues: UPF0102 protein Reut_A3265 (127 aa).

The protein belongs to the UPF0102 family.

The chain is UPF0102 protein Reut_A3265 from Cupriavidus pinatubonensis (strain JMP 134 / LMG 1197) (Cupriavidus necator (strain JMP 134)).